The following is a 429-amino-acid chain: Protein AST1 (429 aa).

Interacts with PMA1.

The protein resides in the cell membrane. Its subcellular location is the membrane raft. It is found in the golgi apparatus membrane. The protein localises to the late endosome membrane. Lipid raft-associated protein involved in the targeting of PMA1 from Golgi to the plasma membrane. May induce clustering of PMA1, which facilitates partition of PMA1 into lipid rafts after leaving the ER and its transport to the cell surface. This Saccharomyces cerevisiae (strain ATCC 204508 / S288c) (Baker's yeast) protein is Protein AST1.